The following is a 535-amino-acid chain: Probable inorganic phosphate transporter 1-7 (535 aa).

Residues M1 to A24 are Cytoplasmic-facing. A helical transmembrane segment spans residues I25 to V45. At T46–S70 the chain is on the extracellular side. A helical transmembrane segment spans residues A71 to L91. The Cytoplasmic segment spans residues G92–K99. The helical transmembrane segment at V100–G120 threads the bilayer. Residues S121 to C131 lie on the Extracellular side of the membrane. Residues F132–M152 traverse the membrane as a helical segment. Residues S153–R161 lie on the Cytoplasmic side of the membrane. The chain crosses the membrane as a helical span at residues G162–F182. Topologically, residues A183 to A211 are extracellular. A helical membrane pass occupies residues D212–S232. Residues R233–R289 are Cytoplasmic-facing. A helical membrane pass occupies residues H290–S310. The Extracellular segment spans residues Q311–T345. Residues L346–I366 form a helical membrane-spanning segment. Residues G367–R368 are Cytoplasmic-facing. A helical membrane pass occupies residues F369–P389. The Extracellular portion of the chain corresponds to Y390 to R399. Residues I400–T420 form a helical membrane-spanning segment. At T421 to H438 the chain is on the cytoplasmic side. The chain crosses the membrane as a helical span at residues G439–L459. The Extracellular portion of the chain corresponds to A460 to N480. A helical transmembrane segment spans residues S481–E501. Residues S502 to A535 lie on the Cytoplasmic side of the membrane. The interval S506–A535 is disordered. Low complexity predominate over residues E519–A535. Phosphoserine is present on S520.

The protein belongs to the major facilitator superfamily. Phosphate:H(+) symporter (TC 2.A.1.9) family. As to expression, mature pollen.

The protein resides in the membrane. Its function is as follows. High-affinity transporter for external inorganic phosphate. This chain is Probable inorganic phosphate transporter 1-7 (PHT1-7), found in Arabidopsis thaliana (Mouse-ear cress).